Here is a 149-residue protein sequence, read N- to C-terminus: uncharacterized protein (149 aa).

Positions 1-11 (MTKESKPDRLR) are enriched in basic and acidic residues. The interval 1 to 20 (MTKESKPDRLRQMGALNPKP) is disordered.

This is an uncharacterized protein from Sinorhizobium fredii (strain NBRC 101917 / NGR234).